Reading from the N-terminus, the 207-residue chain is Urease accessory protein UreG (207 aa).

A GTP-binding site is contributed by 12–19 (GPVGAGKT).

This sequence belongs to the SIMIBI class G3E GTPase family. UreG subfamily. In terms of assembly, homodimer. UreD, UreF and UreG form a complex that acts as a GTP-hydrolysis-dependent molecular chaperone, activating the urease apoprotein by helping to assemble the nickel containing metallocenter of UreC. The UreE protein probably delivers the nickel.

It is found in the cytoplasm. In terms of biological role, facilitates the functional incorporation of the urease nickel metallocenter. This process requires GTP hydrolysis, probably effectuated by UreG. This is Urease accessory protein UreG from Cereibacter sphaeroides (strain KD131 / KCTC 12085) (Rhodobacter sphaeroides).